Consider the following 684-residue polypeptide: Sorbicillinoid biosynthetic cluster transcription factor 2 (684 aa).

Residues 114-151 (ISSAPSLETPPESVAASPPTVDSIPVSHHVNEDPEAEP) form a disordered region.

The protein resides in the nucleus. Transcription factor that acts in concert with sorR1 which is a transcriptional activator of the gene cluster that mediates the biosynthesis of sorbicillinoids, a diverse group of yellow secondary metabolites that restrict growth of competing pathogenic fungi but not of bacteria. The polypeptide is Sorbicillinoid biosynthetic cluster transcription factor 2 (Penicillium rubens (strain ATCC 28089 / DSM 1075 / NRRL 1951 / Wisconsin 54-1255) (Penicillium chrysogenum)).